The following is a 345-amino-acid chain: tRNA-dihydrouridine(20/20a) synthase (345 aa).

FMN is bound by residues 32-34 (PML) and Q84. C114 serves as the catalytic Proton donor. Residues K153, H186, 226–228 (NGG), and 248–249 (GR) contribute to the FMN site.

Belongs to the Dus family. DusA subfamily. It depends on FMN as a cofactor.

The catalysed reaction is 5,6-dihydrouridine(20) in tRNA + NADP(+) = uridine(20) in tRNA + NADPH + H(+). The enzyme catalyses 5,6-dihydrouridine(20) in tRNA + NAD(+) = uridine(20) in tRNA + NADH + H(+). It catalyses the reaction 5,6-dihydrouridine(20a) in tRNA + NADP(+) = uridine(20a) in tRNA + NADPH + H(+). It carries out the reaction 5,6-dihydrouridine(20a) in tRNA + NAD(+) = uridine(20a) in tRNA + NADH + H(+). In terms of biological role, catalyzes the synthesis of 5,6-dihydrouridine (D), a modified base found in the D-loop of most tRNAs, via the reduction of the C5-C6 double bond in target uridines. Specifically modifies U20 and U20a in tRNAs. This is tRNA-dihydrouridine(20/20a) synthase from Escherichia coli O157:H7.